The following is a 217-amino-acid chain: MKIFIDTANVEEIRKASELGVLSGVTTNPSLIAKEGRDLKEVVEEICSIVDGPISAEVISLEHEKMIEEGRELSKLHKNIVIKIPMCEEGLKAVSVLSKEGIKTNVTLIFSSMQALLAARAGATYVSPFLGRLDDIGNPGIEVVEQIADMFKIHEIKTEIIAASVRTPMHVLEAAMAGSHIATIPYKVIIQMSKHALTDIGIEKFMKDYEKAFGENK.

The Schiff-base intermediate with substrate role is filled by Lys83.

The protein belongs to the transaldolase family. Type 3B subfamily.

The protein localises to the cytoplasm. The enzyme catalyses D-sedoheptulose 7-phosphate + D-glyceraldehyde 3-phosphate = D-erythrose 4-phosphate + beta-D-fructose 6-phosphate. Its pathway is carbohydrate degradation; pentose phosphate pathway; D-glyceraldehyde 3-phosphate and beta-D-fructose 6-phosphate from D-ribose 5-phosphate and D-xylulose 5-phosphate (non-oxidative stage): step 2/3. Functionally, transaldolase is important for the balance of metabolites in the pentose-phosphate pathway. This chain is Probable transaldolase, found in Clostridium botulinum (strain Loch Maree / Type A3).